We begin with the raw amino-acid sequence, 744 residues long: Cytoskeleton-associated protein 2-like (744 aa).

Disordered regions lie at residues 35–56 (YLKAKNNCPNPPHSKSTIGPKK), 76–169 (LQSR…THVE), 182–216 (KENLPQDLPNSERKPNPESWTINKPQTNQTKSSLA), 317–337 (TVTEQKVKHSKPSTHPSVLQG), and 428–452 (NKTAPRTQAGGPTISGRGVPNGAQT). Composition is skewed to polar residues over residues 76-86 (LQSRPANITRS), 102-129 (SESVSSNPNGKPPGNSQQLRGFGSSTDG), and 137-154 (GSLNVQKLKTTKQQVTDQ). Lys195 participates in a covalent cross-link: Glycyl lysine isopeptide (Lys-Gly) (interchain with G-Cter in SUMO1); alternate. Lys195 participates in a covalent cross-link: Glycyl lysine isopeptide (Lys-Gly) (interchain with G-Cter in SUMO2); alternate. Residues 199–216 (ESWTINKPQTNQTKSSLA) are compositionally biased toward polar residues. Residue Ser744 is modified to Phosphoserine.

Belongs to the CKAP2 family. In terms of processing, ubiquitinated by the anaphase promoting complex/cyclosome (APC/C).

The protein localises to the cytoplasm. Its subcellular location is the cytoskeleton. It is found in the spindle pole. Microtubule-associated protein required for mitotic spindle formation and cell-cycle progression in neural progenitor cells. This chain is Cytoskeleton-associated protein 2-like (CKAP2L), found in Bos taurus (Bovine).